Here is a 305-residue protein sequence, read N- to C-terminus: Protoheme IX farnesyltransferase 2 (305 aa).

A run of 8 helical transmembrane segments spans residues 31–51, 53–73, 103–123, 125–145, 152–172, 179–199, 231–251, and 277–297; these read VVML…ETWI, WKIL…AAVI, ALVF…LWVN, LTAL…TMYL, NIVI…TAVT, ALLL…ALAI, VLLA…AIYL, and AMKT…VLLV.

The protein belongs to the UbiA prenyltransferase family. Protoheme IX farnesyltransferase subfamily.

The protein localises to the cell inner membrane. It catalyses the reaction heme b + (2E,6E)-farnesyl diphosphate + H2O = Fe(II)-heme o + diphosphate. Its pathway is porphyrin-containing compound metabolism; heme O biosynthesis; heme O from protoheme: step 1/1. Functionally, converts heme B (protoheme IX) to heme O by substitution of the vinyl group on carbon 2 of heme B porphyrin ring with a hydroxyethyl farnesyl side group. This Pseudoalteromonas atlantica (strain T6c / ATCC BAA-1087) protein is Protoheme IX farnesyltransferase 2.